A 464-amino-acid polypeptide reads, in one-letter code: Dihydrolipoyl dehydrogenase (464 aa).

Residues 33–41, Lys50, and Gly113 contribute to the FAD site; that span reads EPKYWGGVC. Residues Cys41 and Cys46 are joined by a disulfide bond. Residues 178–182, Glu201, and 266–269 contribute to the NAD(+) site; these read GAGAI and AIGF. FAD is bound by residues Asp309 and Ala317. Catalysis depends on His443, which acts as the Proton acceptor.

Belongs to the class-I pyridine nucleotide-disulfide oxidoreductase family. As to quaternary structure, homodimer. Part of the PDH complex, consisting of multiple copies of AceE (E1), DlaT (E2) and Lpd (E3), and of the BCKADH complex, consisting of multiple copies of BkdA/BkdB (E1), BkdC (E2) and Lpd (E3). FAD is required as a cofactor.

Its subcellular location is the cytoplasm. It carries out the reaction N(6)-[(R)-dihydrolipoyl]-L-lysyl-[protein] + NAD(+) = N(6)-[(R)-lipoyl]-L-lysyl-[protein] + NADH + H(+). In terms of biological role, lipoamide dehydrogenase is a component of the alpha-ketoacid dehydrogenase complexes. Catalyzes the reoxidation of dihydrolipoyl groups which are covalently attached to the lipoate acyltransferase components (E2) of the complexes. The protein is Dihydrolipoyl dehydrogenase (lpd) of Mycobacterium bovis (strain ATCC BAA-935 / AF2122/97).